A 138-amino-acid polypeptide reads, in one-letter code: Small ribosomal subunit protein uS12 (138 aa).

Residues 33 to 55 (KEHTNVSSPQKRGVCTRVGTMTP) form a disordered region. D102 is subject to 3-methylthioaspartic acid.

The protein belongs to the universal ribosomal protein uS12 family. In terms of assembly, part of the 30S ribosomal subunit. Contacts proteins S8 and S17. May interact with IF1 in the 30S initiation complex.

With S4 and S5 plays an important role in translational accuracy. In terms of biological role, interacts with and stabilizes bases of the 16S rRNA that are involved in tRNA selection in the A site and with the mRNA backbone. Located at the interface of the 30S and 50S subunits, it traverses the body of the 30S subunit contacting proteins on the other side and probably holding the rRNA structure together. The combined cluster of proteins S8, S12 and S17 appears to hold together the shoulder and platform of the 30S subunit. This Bacillus velezensis (strain DSM 23117 / BGSC 10A6 / LMG 26770 / FZB42) (Bacillus amyloliquefaciens subsp. plantarum) protein is Small ribosomal subunit protein uS12.